Reading from the N-terminus, the 337-residue chain is MRLTASEIAAQFGLTVVGDGATEVSGVATLAHAGTGQLSFLANPRYRPQLAETQASVVILRADDAESAQGTALVAKDPYTAFAKIAALFDVAPVRAPGIHASAVIDPTATVSPTAHVGPFVSIGAGSRVGDGCVIGAGSIIGEDCVVDDGCELIARVTLVTRVRLGKRVRVHPGAVLGADGFGLAMDAGHWIKVPQLGGVVIGDDCEIGANTCIDRGALEDTVLEEDVRVDNLVQIAHNCRIGAHSAIAGCTGIAGSAKIGRYCLLGGHVGVVGHLEICDKVVITGKSVVRNSIHEPGEYSSGTPLTDNRTWRKNAARFKQLDALARRILAVGKENQ.

The active-site Proton acceptor is the H238.

Belongs to the transferase hexapeptide repeat family. LpxD subfamily. In terms of assembly, homotrimer.

It catalyses the reaction a UDP-3-O-[(3R)-3-hydroxyacyl]-alpha-D-glucosamine + a (3R)-hydroxyacyl-[ACP] = a UDP-2-N,3-O-bis[(3R)-3-hydroxyacyl]-alpha-D-glucosamine + holo-[ACP] + H(+). It participates in bacterial outer membrane biogenesis; LPS lipid A biosynthesis. Functionally, catalyzes the N-acylation of UDP-3-O-acylglucosamine using 3-hydroxyacyl-ACP as the acyl donor. Is involved in the biosynthesis of lipid A, a phosphorylated glycolipid that anchors the lipopolysaccharide to the outer membrane of the cell. In Xanthomonas campestris pv. campestris (strain 8004), this protein is UDP-3-O-acylglucosamine N-acyltransferase.